The following is a 292-amino-acid chain: uncharacterized protein (292 aa).

The next 10 helical transmembrane spans lie at 6–26 (LGIISVTLIWGYTWVAMKVGI), 32–52 (LLFSGLRLFIGAVPLFLILFI), 68–88 (IIMSLLMGLGYMGILTYGMQF), 94–114 (TSVLVYTMPIFVTVISHFSLN), 123–143 (MGLVCGLFGLLFIFGKEMLNI), 147–167 (ALFGELCVLVAALSWGIANVF), 182–202 (AWHLMMGAVMLLVFSFIFEAV), 214–234 (SLLFNGLLSTGFTFVVWFWVL), 242–262 (ASMALMFVPVLALFFGWLQLH), and 265–285 (ITINIILGALLICCGIFMNTF). EamA domains follow at residues 13 to 137 (LIWG…FIFG) and 159 to 285 (LSWG…MNTF).

It belongs to the EamA transporter family.

The protein localises to the cell membrane. This is an uncharacterized protein from Bacillus subtilis (strain 168).